Consider the following 1373-residue polypeptide: MVSLRDNIEAQPLSHNRRIRKNFGHINLVADIPNLIEIQKNSYEKNFLQLNIKDSERKNKGLQSILNSIFPISDSSNIANLEFVKYEFDTPKYDVEECSQRSLSYAAPLKVTLRLSIWDIDEDTGTREIKGIKEQEVYMGDIPLMTKNGTFIINGTERVVVSQMHRSPGVFFYHDEGKVHSSGKLLYSARVIPYRGSWLDLEFDAKDVIYFRIDRKRKLYITTLLRAIGMSTEEIIKFYYNSVTYKLVKNKGWAVKFIPQHITAHRLTSDLVDADTGNILLKAGQKITPRLAKKYFGEGLNNILVAHETLIGKYLSEDLRDPTSDEVLAKIGEMITADMLNVINALKIKNVNVLVINPQSGPYIRNTLFADKNQDREAALCDIFRVLRPGEPANIEAAESLFYNLFFDVERYDLSEVGRIKMNSRLELNISEEVTVLTIDDIKNIVRVLVELKDGKGIIDDIDHLGNRRVRSVGELIENQFRIGLVRMEKSVIERMSAGDVDTVMPHDLVNSKILVSVVKEFFNTSQLSQFMDQTNPLSEITHKRRLSALGPGGLSRDRAGFEVRDVHPTHYGRICPIETPEGQNIGLINSMATYARINKHGFIESPYRRVKDGCVTDEVVYLSAIEEGKYKIGQANSKVNKDGKLQGEFINCRVEGGNFVMVEPYEVDFIDVTPMQVVSVAASLIPFLENDDANRALMGSNMQRQAVPLIKTDAPFVGTGVEGVVAKDSGASVLALHDGIVEQVDSNRIVIRTLEQKVDGSPSVDIYNLLKFQKSNHNTCINQKPLVKVGHYVKKNDIIADGPSTDNGEIALGRNVLVAFLPWNGYNFEDSILISERIVKEDVFTSIHIEEFEVIARDTRLGPEEITRDIPNVSEEALRHLDEVGIIYIGAEVKAGDILVGKVTPKSESPITPEEKLLRAIFGEKAFDVKDSSLHVPSGVSGTVVEVRVFSRRGVEKDQRAIAIEKQQIEKLAKDRDDELEIIEHFVFSWLEKLLVGQVIINGPKQVKVGQTITTEMLKGLSKGQFWQITVEDANVMNEIEQIKTHYDEKKEALDKRFATKVEKLQSGDDLPQGALKVVKVFIATKHKLQPGDKMAGRHGNKGVISRIVPEEDMPFLEDGTVVDIVLNPLGLPSRMNIGQILETHLGWASINLAKKISTLVKEYKNKHIGIEQIKKFLIELYGENINSILERPEEEIISFCKKVSKGVHFATPVFDGAKVQDVKDMLKLAGQDPSGQVKLIDGRTGEYFDRLVTVGQKYLLKLHHLVDNKIHSRSIGPYSLVTQQPLGGKSHFGGQRFGEMECWALQAYGAAYTLQEMLTVKSDDVNGRIKTYDSIVRGENNFESGIPESFNVMIKEFRSLCLNVKLEVTSS.

It belongs to the RNA polymerase beta chain family. In terms of assembly, the RNAP catalytic core consists of 2 alpha, 1 beta, 1 beta' and 1 omega subunit. When a sigma factor is associated with the core the holoenzyme is formed, which can initiate transcription.

It catalyses the reaction RNA(n) + a ribonucleoside 5'-triphosphate = RNA(n+1) + diphosphate. Functionally, DNA-dependent RNA polymerase catalyzes the transcription of DNA into RNA using the four ribonucleoside triphosphates as substrates. The protein is DNA-directed RNA polymerase subunit beta of Rickettsia massiliae (strain Mtu5).